The following is a 436-amino-acid chain: 3-ketoacyl-CoA thiolase (436 aa).

Catalysis depends on Cys99, which acts as the Acyl-thioester intermediate. Catalysis depends on proton acceptor residues His392 and Cys422.

Belongs to the thiolase-like superfamily. Thiolase family. As to quaternary structure, heterotetramer of two alpha chains (FadJ) and two beta chains (FadI).

Its subcellular location is the cytoplasm. It carries out the reaction an acyl-CoA + acetyl-CoA = a 3-oxoacyl-CoA + CoA. The protein operates within lipid metabolism; fatty acid beta-oxidation. Catalyzes the final step of fatty acid oxidation in which acetyl-CoA is released and the CoA ester of a fatty acid two carbons shorter is formed. The polypeptide is 3-ketoacyl-CoA thiolase (Salmonella paratyphi A (strain AKU_12601)).